Here is a 631-residue protein sequence, read N- to C-terminus: Phosphomethylpyrimidine synthase (631 aa).

Substrate-binding positions include asparagine 239, methionine 268, tyrosine 297, histidine 333, 353 to 355, 394 to 397, and glutamate 433; these read SRG and DGLR. Histidine 437 contributes to the Zn(2+) binding site. A substrate-binding site is contributed by tyrosine 460. Residue histidine 501 participates in Zn(2+) binding. Positions 581, 584, and 589 each coordinate [4Fe-4S] cluster.

Belongs to the ThiC family. In terms of assembly, homodimer. [4Fe-4S] cluster is required as a cofactor.

The enzyme catalyses 5-amino-1-(5-phospho-beta-D-ribosyl)imidazole + S-adenosyl-L-methionine = 4-amino-2-methyl-5-(phosphooxymethyl)pyrimidine + CO + 5'-deoxyadenosine + formate + L-methionine + 3 H(+). It participates in cofactor biosynthesis; thiamine diphosphate biosynthesis. Catalyzes the synthesis of the hydroxymethylpyrimidine phosphate (HMP-P) moiety of thiamine from aminoimidazole ribotide (AIR) in a radical S-adenosyl-L-methionine (SAM)-dependent reaction. In Escherichia fergusonii (strain ATCC 35469 / DSM 13698 / CCUG 18766 / IAM 14443 / JCM 21226 / LMG 7866 / NBRC 102419 / NCTC 12128 / CDC 0568-73), this protein is Phosphomethylpyrimidine synthase.